Reading from the N-terminus, the 427-residue chain is ATP-sensitive inward rectifier potassium channel 12 (427 aa).

Residues 1–77 (MTAASRANPY…LADMFTTCVD (77 aa)) are Cytoplasmic-facing. Cys75 is modified (S-nitrosocysteine). A helical transmembrane segment spans residues 78-104 (IRWRYMLLIFSLAFLASWLLFGIIFWV). The a 1,2-diacyl-sn-glycero-3-phospho-(1D-myo-inositol-4,5-bisphosphate) site is built by Arg79 and Arg81. Residues 105 to 129 (IAVAHGDLEPAEGRGRTPCVLQVHG) are Extracellular-facing. A disulfide bridge connects residues Cys123 and Cys155. Positions 130 to 146 (FMAAFLFSIETQTTIGY) form an intramembrane region, helical; Pore-forming. 4 residues coordinate K(+): Thr143, Ile144, Gly145, and Tyr146. The Selectivity filter signature appears at 143–148 (TIGYGL). Topologically, residues 147–155 (GLRCVTEEC) are extracellular. A helical membrane pass occupies residues 156-183 (PVAVFMVVAQSIVGCIIDSFMIGAIMAK). A 1,2-diacyl-sn-glycero-3-phospho-(1D-myo-inositol-4,5-bisphosphate)-binding residues include Lys183 and Lys188. The Cytoplasmic segment spans residues 184–427 (MGRPKKRAQT…ERPYRRESEI (244 aa)). Residues 387–427 (DEEDEVATDRDGRSPQPEHDFDRLQASSGALERPYRRESEI) form a disordered region. Over residues 393–409 (ATDRDGRSPQPEHDFDR) the composition is skewed to basic and acidic residues. The PDZ-binding motif lies at 425 to 427 (SEI).

The protein belongs to the inward rectifier-type potassium channel (TC 1.A.2.1) family. KCNJ12 subfamily. As to quaternary structure, homotetramer. Forms heteromer with KCNJ4. Can form heteromeric channels with Kir2.6/KCNJ18. Association, via its PDZ-recognition domain, with LIN7A, LIN7B, LIN7C, DLG1, CASK and APBA1 plays a key role in its localization and trafficking. In terms of tissue distribution, highest level in cerebellum. Moderately found in kidney, forebrain and skeletal muscle. Not detected in uterus, liver and pancreas.

It localises to the membrane. It is found in the cell membrane. The protein localises to the sarcolemma. Its subcellular location is the T-tubule. It carries out the reaction K(+)(in) = K(+)(out). With respect to regulation, activated by phosphatidylinositol 4,5-biphosphate (PtdIns(4,5)P2). PtdIns(4,5)P2 binding to the cytoplasmic side of the channel triggers a conformation change leading to channel opening. Inhibited by Ba(2+). Functionally, inward rectifying potassium channel that probably participates in controlling the resting membrane potential in electrically excitable cells. It probably participates in establishing action potential waveform and excitability of neuronal and muscle tissues. Inward rectifier potassium channels are characterized by a greater tendency to allow potassium to flow into the cell rather than out of it. Their voltage dependence is regulated by the concentration of extracellular potassium; as external potassium is raised, the voltage range of the channel opening shifts to more positive voltages. The inward rectification is mainly due to the blockage of outward current by internal magnesium. In Rattus norvegicus (Rat), this protein is ATP-sensitive inward rectifier potassium channel 12 (Kcnj12).